Here is a 471-residue protein sequence, read N- to C-terminus: Kynurenine 3-monooxygenase (471 aa).

Residues Val19, 37–40, and Ala57 contribute to the FAD site; that span reads YESR. The L-kynurenine site is built by Arg85 and Tyr99. Residues Arg111, Leu136, Thr172, Asp304, and 317–318 each bind FAD; that span reads MN. Positions 363 and 398 each coordinate L-kynurenine. A run of 2 helical transmembrane segments spans residues 385–404 and 425–445; these read CLHT…VTFS and ALFF…TGPT.

Belongs to the aromatic-ring hydroxylase family. KMO subfamily. FAD serves as cofactor.

It is found in the mitochondrion outer membrane. It carries out the reaction L-kynurenine + NADPH + O2 + H(+) = 3-hydroxy-L-kynurenine + NADP(+) + H2O. The protein operates within cofactor biosynthesis; NAD(+) biosynthesis; quinolinate from L-kynurenine: step 1/3. Functionally, catalyzes the hydroxylation of L-kynurenine (L-Kyn) to form 3-hydroxy-L-kynurenine (L-3OHKyn). Required for synthesis of quinolinic acid, a neurotoxic NMDA receptor antagonist and potential endogenous inhibitor of NMDA receptor signaling in axonal targeting, synaptogenesis and apoptosis during brain development. Quinolinic acid may also affect NMDA receptor signaling in pancreatic beta cells, osteoblasts, myocardial cells, and the gastrointestinal tract. This chain is Kynurenine 3-monooxygenase, found in Sus scrofa (Pig).